A 247-amino-acid chain; its full sequence is Geranylgeranylglyceryl phosphate synthase (247 aa).

Mg(2+) contacts are provided by aspartate 23 and serine 52. Sn-glycerol 1-phosphate contacts are provided by residues 171–177 (YLEAGSG), 203–204 (GG), and 225–226 (GT).

Belongs to the GGGP/HepGP synthase family. Group II subfamily. Mg(2+) serves as cofactor.

The protein localises to the cytoplasm. The enzyme catalyses sn-glycerol 1-phosphate + (2E,6E,10E)-geranylgeranyl diphosphate = sn-3-O-(geranylgeranyl)glycerol 1-phosphate + diphosphate. Its pathway is membrane lipid metabolism; glycerophospholipid metabolism. Functionally, prenyltransferase that catalyzes the transfer of the geranylgeranyl moiety of geranylgeranyl diphosphate (GGPP) to the C3 hydroxyl of sn-glycerol-1-phosphate (G1P). This reaction is the first ether-bond-formation step in the biosynthesis of archaeal membrane lipids. This is Geranylgeranylglyceryl phosphate synthase from Methanococcoides burtonii (strain DSM 6242 / NBRC 107633 / OCM 468 / ACE-M).